An 82-amino-acid polypeptide reads, in one-letter code: Small ribosomal subunit protein bS18 (82 aa).

It belongs to the bacterial ribosomal protein bS18 family. Part of the 30S ribosomal subunit. Forms a tight heterodimer with protein bS6.

Binds as a heterodimer with protein bS6 to the central domain of the 16S rRNA, where it helps stabilize the platform of the 30S subunit. This is Small ribosomal subunit protein bS18 from Bifidobacterium longum (strain NCC 2705).